Here is a 348-residue protein sequence, read N- to C-terminus: Dihydroorotase (348 aa).

The Zn(2+) site is built by His-17 and His-19. Residues 19–21 (HLR) and Asn-45 contribute to the substrate site. The Zn(2+) site is built by Lys-103, His-140, and His-178. Lys-103 is modified (N6-carboxylysine). Position 140 (His-140) interacts with substrate. Leu-223 contacts substrate. Asp-251 contacts Zn(2+). Asp-251 is a catalytic residue. Residues His-255 and Ala-267 each contribute to the substrate site.

Belongs to the metallo-dependent hydrolases superfamily. DHOase family. Class II DHOase subfamily. As to quaternary structure, homodimer. It depends on Zn(2+) as a cofactor.

It carries out the reaction (S)-dihydroorotate + H2O = N-carbamoyl-L-aspartate + H(+). It functions in the pathway pyrimidine metabolism; UMP biosynthesis via de novo pathway; (S)-dihydroorotate from bicarbonate: step 3/3. Its function is as follows. Catalyzes the reversible cyclization of carbamoyl aspartate to dihydroorotate. The polypeptide is Dihydroorotase (Shigella flexneri).